The chain runs to 637 residues: 1-deoxy-D-xylulose-5-phosphate synthase (637 aa).

Thiamine diphosphate contacts are provided by residues His88 and 129–131 (GHS). A Mg(2+)-binding site is contributed by Asp160. Thiamine diphosphate is bound by residues 161 to 162 (GA), Asn189, Phe293, and Glu370. Residue Asn189 coordinates Mg(2+).

It belongs to the transketolase family. DXPS subfamily. In terms of assembly, homodimer. It depends on Mg(2+) as a cofactor. Thiamine diphosphate serves as cofactor.

The catalysed reaction is D-glyceraldehyde 3-phosphate + pyruvate + H(+) = 1-deoxy-D-xylulose 5-phosphate + CO2. The protein operates within metabolic intermediate biosynthesis; 1-deoxy-D-xylulose 5-phosphate biosynthesis; 1-deoxy-D-xylulose 5-phosphate from D-glyceraldehyde 3-phosphate and pyruvate: step 1/1. In terms of biological role, catalyzes the acyloin condensation reaction between C atoms 2 and 3 of pyruvate and glyceraldehyde 3-phosphate to yield 1-deoxy-D-xylulose-5-phosphate (DXP). The polypeptide is 1-deoxy-D-xylulose-5-phosphate synthase (Acinetobacter baumannii (strain AYE)).